Here is a 515-residue protein sequence, read N- to C-terminus: Maturase K (515 aa).

The protein belongs to the intron maturase 2 family. MatK subfamily.

Its subcellular location is the plastid. It localises to the chloroplast. Its function is as follows. Usually encoded in the trnK tRNA gene intron. Probably assists in splicing its own and other chloroplast group II introns. The chain is Maturase K from Pinus halepensis (Aleppo pine).